The primary structure comprises 494 residues: Uric acid degradation bifunctional protein PucL (494 aa).

Residues 1 to 174 (MFTMDDLNQM…EKGETQMKRT (174 aa)) form an OHCU decarboxylase region. Catalysis depends on His68, which acts as the Proton donor; for OHCU decarboxylase activity. 5-hydroxy-2-oxo-4-ureido-2,5-dihydro-1H-imidazole-5-carboxylate is bound by residues Pro69, 81 to 85 (SVREQ), and 116 to 120 (FILAV). The tract at residues 175–494 (MSYGKGNVFA…AAEKCRSLKA (320 aa)) is urate oxidase. Lys179 (charge relay system; for urate oxidase activity) is an active-site residue. The active-site Charge relay system is Lys190. Thr239 acts as the Charge relay system; for urate oxidase activity in catalysis. 7 residues coordinate urate: Thr239, Asp240, Phe349, Arg366, Ile414, Gln415, and Asn441.

The protein in the N-terminal section; belongs to the OHCU decarboxylase family. It in the C-terminal section; belongs to the uricase family.

The enzyme catalyses 5-hydroxy-2-oxo-4-ureido-2,5-dihydro-1H-imidazole-5-carboxylate + H(+) = (S)-allantoin + CO2. It catalyses the reaction urate + O2 + H2O = 5-hydroxyisourate + H2O2. Its pathway is purine metabolism; urate degradation; (S)-allantoin from urate: step 1/3. It functions in the pathway purine metabolism; urate degradation; (S)-allantoin from urate: step 3/3. Functionally, catalyzes two steps in the degradation of uric acid, i.e. the oxidation of uric acid to 5-hydroxyisourate (HIU) and the stereoselective decarboxylation of 2-oxo-4-hydroxy-4-carboxy-5-ureidoimidazoline (OHCU) to (S)-allantoin. This chain is Uric acid degradation bifunctional protein PucL (pucL), found in Bacillus subtilis (strain 168).